A 151-amino-acid polypeptide reads, in one-letter code: ATP synthase subunit b' (151 aa).

Residues 18 to 38 (TLPLMALQVVLLTFILNALFF) traverse the membrane as a helical segment.

Belongs to the ATPase B chain family. F-type ATPases have 2 components, F(1) - the catalytic core - and F(0) - the membrane proton channel. F(1) has five subunits: alpha(3), beta(3), gamma(1), delta(1), epsilon(1). F(0) has four main subunits: a(1), b(1), b'(1) and c(10-14). The alpha and beta chains form an alternating ring which encloses part of the gamma chain. F(1) is attached to F(0) by a central stalk formed by the gamma and epsilon chains, while a peripheral stalk is formed by the delta, b and b' chains.

The protein localises to the cellular thylakoid membrane. Its function is as follows. F(1)F(0) ATP synthase produces ATP from ADP in the presence of a proton or sodium gradient. F-type ATPases consist of two structural domains, F(1) containing the extramembraneous catalytic core and F(0) containing the membrane proton channel, linked together by a central stalk and a peripheral stalk. During catalysis, ATP synthesis in the catalytic domain of F(1) is coupled via a rotary mechanism of the central stalk subunits to proton translocation. Functionally, component of the F(0) channel, it forms part of the peripheral stalk, linking F(1) to F(0). The b'-subunit is a diverged and duplicated form of b found in plants and photosynthetic bacteria. This Prochlorococcus marinus (strain MIT 9303) protein is ATP synthase subunit b'.